The following is a 336-amino-acid chain: MGSIKVTVLGAGSWGTALSNLLAQKGVNTVLWGRDSAVIEEINRERENKRYLPGVKISQELIATADLEFALKDANFLVAAVPSQAFRDLLQKIKPYFKPEQILVNTAKGIEEGSLLRMSAVFTEVLPEYRDNYTILSGPSHAEEVGRGIPTAIVVSGYSPEKLYKVQELFSTEYFRVYTNDDLTGVELGGSLKNIIAIASGICTGLGLGDNTRAALVTRGLIEITRLGIKLGAKKETFMGLSGLGDLFVTAGSRHSRNYKAGILIGEGKSLEETQKEINMVVEGIRTTRAAYQLAQRLEVEMPITEALYKVLFAGLPPREGLFGLMTRAKKEELNF.

NADPH is bound by residues serine 13, tryptophan 14, arginine 34, and lysine 108. Lysine 108, glycine 138, and serine 140 together coordinate sn-glycerol 3-phosphate. Alanine 142 serves as a coordination point for NADPH. Lysine 193, aspartate 246, serine 256, arginine 257, and asparagine 258 together coordinate sn-glycerol 3-phosphate. Lysine 193 functions as the Proton acceptor in the catalytic mechanism. Arginine 257 lines the NADPH pocket. Positions 281 and 283 each coordinate NADPH.

The protein belongs to the NAD-dependent glycerol-3-phosphate dehydrogenase family.

The protein resides in the cytoplasm. The catalysed reaction is sn-glycerol 3-phosphate + NAD(+) = dihydroxyacetone phosphate + NADH + H(+). It carries out the reaction sn-glycerol 3-phosphate + NADP(+) = dihydroxyacetone phosphate + NADPH + H(+). The protein operates within membrane lipid metabolism; glycerophospholipid metabolism. Catalyzes the reduction of the glycolytic intermediate dihydroxyacetone phosphate (DHAP) to sn-glycerol 3-phosphate (G3P), the key precursor for phospholipid synthesis. The sequence is that of Glycerol-3-phosphate dehydrogenase [NAD(P)+] from Carboxydothermus hydrogenoformans (strain ATCC BAA-161 / DSM 6008 / Z-2901).